Here is a 408-residue protein sequence, read N- to C-terminus: Heparan-sulfate 6-O-sulfotransferase 1 (408 aa).

Residues 8 to 14 (MVERTSK) lie on the Cytoplasmic side of the membrane. Residues 15 to 35 (FLLIVAASVCFMLILYQYVGP) form a helical; Signal-anchor for type II membrane protein membrane-spanning segment. Topologically, residues 36–408 (GLSLGAPSGR…DYMSHIIEKW (373 aa)) are lumenal. 90–98 (HIQKTGGTT) provides a ligand contact to 3'-phosphoadenylyl sulfate. Substrate-binding positions include 120 to 121 (KK), arginine 137, tryptophan 142, and histidine 147. Residue histidine 147 is the Proton acceptor of the active site. Residues arginine 182 and serine 190 each coordinate 3'-phosphoadenylyl sulfate. Residues histidine 194 and tryptophan 201 each coordinate substrate. N-linked (GlcNAc...) asparagine glycosylation is present at asparagine 261. Position 314–316 (314–316 (MQY)) interacts with 3'-phosphoadenylyl sulfate. A glycan (N-linked (GlcNAc...) asparagine) is linked at asparagine 317. 320–321 (RA) serves as a coordination point for 3'-phosphoadenylyl sulfate. N-linked (GlcNAc...) asparagine glycosylation is present at asparagine 328. A coiled-coil region spans residues 348–382 (AKDLFQQRYQYKRQLERMEQRIKNREERLLHRSNE). Residues 376–396 (LLHRSNEALPKEETEEQGRLP) are disordered.

The protein belongs to the sulfotransferase 6 family. N-glycosylated.

It is found in the membrane. The catalysed reaction is alpha-D-glucosaminyl-[heparan sulfate](n) + 3'-phosphoadenylyl sulfate = 6-sulfo-alpha-D-glucosaminyl-[heparan sulfate](n) + adenosine 3',5'-bisphosphate + H(+). Its function is as follows. 6-O-sulfation enzyme which catalyzes the transfer of sulfate from 3'-phosphoadenosine 5'-phosphosulfate (PAPS) to position 6 of the N-sulfoglucosamine residue (GlcNS) of heparan sulfate. May also play a role in limb development. This is Heparan-sulfate 6-O-sulfotransferase 1 from Gallus gallus (Chicken).